A 275-amino-acid polypeptide reads, in one-letter code: Dermonecrotic toxin LhSicTox-alphaVI1ii (275 aa).

Histidine 5 is an active-site residue. Mg(2+)-binding residues include glutamate 25 and aspartate 27. Catalysis depends on histidine 41, which acts as the Nucleophile. Disulfide bonds link cysteine 45-cysteine 51 and cysteine 47-cysteine 192. Residue aspartate 85 coordinates Mg(2+).

Belongs to the arthropod phospholipase D family. Class II subfamily. Requires Mg(2+) as cofactor. As to expression, expressed by the venom gland.

It is found in the secreted. It catalyses the reaction an N-(acyl)-sphingosylphosphocholine = an N-(acyl)-sphingosyl-1,3-cyclic phosphate + choline. The enzyme catalyses an N-(acyl)-sphingosylphosphoethanolamine = an N-(acyl)-sphingosyl-1,3-cyclic phosphate + ethanolamine. It carries out the reaction a 1-acyl-sn-glycero-3-phosphocholine = a 1-acyl-sn-glycero-2,3-cyclic phosphate + choline. The catalysed reaction is a 1-acyl-sn-glycero-3-phosphoethanolamine = a 1-acyl-sn-glycero-2,3-cyclic phosphate + ethanolamine. Functionally, dermonecrotic toxins cleave the phosphodiester linkage between the phosphate and headgroup of certain phospholipids (sphingolipid and lysolipid substrates), forming an alcohol (often choline) and a cyclic phosphate. This toxin acts on sphingomyelin (SM). It may also act on ceramide phosphoethanolamine (CPE), lysophosphatidylcholine (LPC) and lysophosphatidylethanolamine (LPE), but not on lysophosphatidylserine (LPS), and lysophosphatidylglycerol (LPG). It acts by transphosphatidylation, releasing exclusively cyclic phosphate products as second products. Induces dermonecrosis, hemolysis, increased vascular permeability, edema, inflammatory response, and platelet aggregation. The polypeptide is Dermonecrotic toxin LhSicTox-alphaVI1ii (Loxosceles hirsuta (Recluse spider)).